A 140-amino-acid polypeptide reads, in one-letter code: Flagellar assembly factor FliW (140 aa).

This sequence belongs to the FliW family. In terms of assembly, interacts with translational regulator CsrA and flagellin(s).

Its subcellular location is the cytoplasm. Its function is as follows. Acts as an anti-CsrA protein, binds CsrA and prevents it from repressing translation of its target genes, one of which is flagellin. Binds to flagellin and participates in the assembly of the flagellum. The polypeptide is Flagellar assembly factor FliW (Syntrophotalea carbinolica (strain DSM 2380 / NBRC 103641 / GraBd1) (Pelobacter carbinolicus)).